Reading from the N-terminus, the 348-residue chain is Anthranilate phosphoribosyltransferase (348 aa).

Residues G89, 92 to 93, T97, 99 to 102, 117 to 125, and S129 contribute to the 5-phospho-alpha-D-ribose 1-diphosphate site; these read GD, NIST, and KHGNRSASS. Residue G89 participates in anthranilate binding. S101 serves as a coordination point for Mg(2+). N120 provides a ligand contact to anthranilate. R175 lines the anthranilate pocket. Positions 234 and 235 each coordinate Mg(2+).

This sequence belongs to the anthranilate phosphoribosyltransferase family. Homodimer. Mg(2+) is required as a cofactor.

It carries out the reaction N-(5-phospho-beta-D-ribosyl)anthranilate + diphosphate = 5-phospho-alpha-D-ribose 1-diphosphate + anthranilate. The protein operates within amino-acid biosynthesis; L-tryptophan biosynthesis; L-tryptophan from chorismate: step 2/5. In terms of biological role, catalyzes the transfer of the phosphoribosyl group of 5-phosphorylribose-1-pyrophosphate (PRPP) to anthranilate to yield N-(5'-phosphoribosyl)-anthranilate (PRA). In Synechocystis sp. (strain ATCC 27184 / PCC 6803 / Kazusa), this protein is Anthranilate phosphoribosyltransferase.